A 380-amino-acid polypeptide reads, in one-letter code: NADPH quinone oxidoreductase (380 aa).

The transit peptide at 1 to 17 (MSSFLSKRFISTTQRAM) directs the protein to the mitochondrion.

This sequence belongs to the zinc-containing alcohol dehydrogenase family. Quinone oxidoreductase subfamily. As to quaternary structure, homodimer.

The protein localises to the mitochondrion. It catalyses the reaction a quinone + NADH + H(+) = a quinol + NAD(+). It carries out the reaction a quinone + NADPH + H(+) = a quinol + NADP(+). Its function is as follows. NADPH quinone oxidoreductase that efficiently reduces 1,4-benzoquinone, whereas no activities are found for menadiones and methoxyquinones. The sequence is that of NADPH quinone oxidoreductase from Kluyveromyces marxianus (Yeast).